A 409-amino-acid chain; its full sequence is Argininosuccinate synthase (409 aa).

ATP-binding positions include 10 to 18 (AYSGGLDTS) and Ala-37. L-citrulline-binding residues include Tyr-90 and Ser-95. Residue Gly-120 coordinates ATP. L-aspartate contacts are provided by Thr-122, Asn-126, and Asp-127. Asn-126 is an L-citrulline binding site. The L-citrulline site is built by Arg-130, Ser-182, Ser-191, Glu-267, and Tyr-279.

This sequence belongs to the argininosuccinate synthase family. Type 1 subfamily. In terms of assembly, homotetramer.

It is found in the cytoplasm. The catalysed reaction is L-citrulline + L-aspartate + ATP = 2-(N(omega)-L-arginino)succinate + AMP + diphosphate + H(+). It participates in amino-acid biosynthesis; L-arginine biosynthesis; L-arginine from L-ornithine and carbamoyl phosphate: step 2/3. The sequence is that of Argininosuccinate synthase from Thiobacillus denitrificans (strain ATCC 25259 / T1).